We begin with the raw amino-acid sequence, 60 residues long: Large ribosomal subunit protein uL30 (60 aa).

It belongs to the universal ribosomal protein uL30 family. As to quaternary structure, part of the 50S ribosomal subunit.

The chain is Large ribosomal subunit protein uL30 from Pseudoalteromonas translucida (strain TAC 125).